The primary structure comprises 231 residues: Aquaporin Z (231 aa).

2 helical membrane passes run 11 to 31 (FLGT…AAAF) and 36 to 56 (IGLL…AFAI). An NPA 1 motif is present at residues 65–67 (NPA). 3 helical membrane-spanning segments follow: residues 84-104 (LPYI…LYLI), 132-152 (MISV…VILG), and 161-181 (GFAP…SIPI). Positions 187–189 (NPA) match the NPA 2 motif. A helical transmembrane segment spans residues 203–223 (VSQLWLFWAAPIIGAILAGVI).

The protein belongs to the MIP/aquaporin (TC 1.A.8) family. Homotetramer.

It localises to the cell inner membrane. The enzyme catalyses H2O(in) = H2O(out). Functionally, channel that permits osmotically driven movement of water in both directions. It is involved in the osmoregulation and in the maintenance of cell turgor during volume expansion in rapidly growing cells. It mediates rapid entry or exit of water in response to abrupt changes in osmolarity. The sequence is that of Aquaporin Z from Shewanella oneidensis (strain ATCC 700550 / JCM 31522 / CIP 106686 / LMG 19005 / NCIMB 14063 / MR-1).